Consider the following 327-residue polypeptide: GMP reductase (327 aa).

Cys-176 functions as the Thioimidate intermediate in the catalytic mechanism. An NADP(+)-binding site is contributed by 205–228 (IIADGGIRTHGDIAKSIRFGASMV).

It belongs to the IMPDH/GMPR family. GuaC type 2 subfamily.

The enzyme catalyses IMP + NH4(+) + NADP(+) = GMP + NADPH + 2 H(+). Its function is as follows. Catalyzes the irreversible NADPH-dependent deamination of GMP to IMP. It functions in the conversion of nucleobase, nucleoside and nucleotide derivatives of G to A nucleotides, and in maintaining the intracellular balance of A and G nucleotides. In Streptococcus agalactiae serotype V (strain ATCC BAA-611 / 2603 V/R), this protein is GMP reductase.